We begin with the raw amino-acid sequence, 229 residues long: 5'-methylthioadenosine/S-adenosylhomocysteine nucleosidase (229 aa).

The Proton acceptor role is filled by Glu12. Substrate-binding positions include Gly78, Ile152, and 173-174; that span reads ME. Asp197 serves as the catalytic Proton donor.

It belongs to the PNP/UDP phosphorylase family. MtnN subfamily.

It carries out the reaction S-adenosyl-L-homocysteine + H2O = S-(5-deoxy-D-ribos-5-yl)-L-homocysteine + adenine. The enzyme catalyses S-methyl-5'-thioadenosine + H2O = 5-(methylsulfanyl)-D-ribose + adenine. The catalysed reaction is 5'-deoxyadenosine + H2O = 5-deoxy-D-ribose + adenine. Its pathway is amino-acid biosynthesis; L-methionine biosynthesis via salvage pathway; S-methyl-5-thio-alpha-D-ribose 1-phosphate from S-methyl-5'-thioadenosine (hydrolase route): step 1/2. In terms of biological role, catalyzes the irreversible cleavage of the glycosidic bond in both 5'-methylthioadenosine (MTA) and S-adenosylhomocysteine (SAH/AdoHcy) to adenine and the corresponding thioribose, 5'-methylthioribose and S-ribosylhomocysteine, respectively. Also cleaves 5'-deoxyadenosine, a toxic by-product of radical S-adenosylmethionine (SAM) enzymes, into 5-deoxyribose and adenine. The chain is 5'-methylthioadenosine/S-adenosylhomocysteine nucleosidase from Mannheimia succiniciproducens (strain KCTC 0769BP / MBEL55E).